The sequence spans 177 residues: Superoxide dismutase [Cu-Zn] 1 (177 aa).

A signal peptide spans 1-20 (MKYTILSLVAGALISCSAMA). 3 residues coordinate Cu cation: H69, H71, and H94. The cysteines at positions 76 and 172 are disulfide-linked. Positions 94, 103, 112, and 115 each coordinate Zn(2+). H150 contributes to the Cu cation binding site.

The protein belongs to the Cu-Zn superoxide dismutase family. As to quaternary structure, monomer. The cofactor is Cu cation. It depends on Zn(2+) as a cofactor.

The protein resides in the periplasm. It catalyses the reaction 2 superoxide + 2 H(+) = H2O2 + O2. Its function is as follows. Destroys radicals which are normally produced within the cells and which are toxic to biological systems. This is Superoxide dismutase [Cu-Zn] 1 (sodC1) from Salmonella typhimurium (strain 4/74).